The sequence spans 234 residues: Glycerol uptake facilitator protein (234 aa).

6 consecutive transmembrane segments (helical) span residues phenylalanine 9–proline 29, glycine 37–glycine 57, proline 61–alanine 81, valine 83–leucine 103, leucine 135–tyrosine 155, and alanine 159–glycine 179. The short motif at asparagine 65–alanine 67 is the NPA 1 element. The NPA 2 signature appears at asparagine 186 to alanine 188. Residues tryptophan 214–phenylalanine 234 form a helical membrane-spanning segment.

It belongs to the MIP/aquaporin (TC 1.A.8) family.

It localises to the cell membrane. It carries out the reaction glycerol(in) = glycerol(out). Mediates glycerol diffusion across the cytoplasmic membrane via a pore-type mechanism. The protein is Glycerol uptake facilitator protein (glpF) of Streptococcus pneumoniae (strain ATCC BAA-255 / R6).